We begin with the raw amino-acid sequence, 492 residues long: Glutamyl-tRNA(Gln) amidotransferase subunit A (492 aa).

Active-site charge relay system residues include Lys-81 and Ser-156. Ser-180 acts as the Acyl-ester intermediate in catalysis.

It belongs to the amidase family. GatA subfamily. In terms of assembly, heterotrimer of A, B and C subunits.

It carries out the reaction L-glutamyl-tRNA(Gln) + L-glutamine + ATP + H2O = L-glutaminyl-tRNA(Gln) + L-glutamate + ADP + phosphate + H(+). In terms of biological role, allows the formation of correctly charged Gln-tRNA(Gln) through the transamidation of misacylated Glu-tRNA(Gln) in organisms which lack glutaminyl-tRNA synthetase. The reaction takes place in the presence of glutamine and ATP through an activated gamma-phospho-Glu-tRNA(Gln). The sequence is that of Glutamyl-tRNA(Gln) amidotransferase subunit A from Rhodococcus erythropolis (strain PR4 / NBRC 100887).